The primary structure comprises 572 residues: Urease subunit alpha (572 aa).

The Urease domain maps to Gly131–Phe572. Residues His136, His138, and Lys219 each coordinate Ni(2+). Lys219 carries the N6-carboxylysine modification. His221 serves as a coordination point for substrate. Positions 248 and 274 each coordinate Ni(2+). Catalysis depends on His322, which acts as the Proton donor. Asp362 lines the Ni(2+) pocket.

Belongs to the metallo-dependent hydrolases superfamily. Urease alpha subunit family. As to quaternary structure, heterotrimer of UreA (gamma), UreB (beta) and UreC (alpha) subunits. Three heterotrimers associate to form the active enzyme. Ni cation is required as a cofactor. In terms of processing, carboxylation allows a single lysine to coordinate two nickel ions.

Its subcellular location is the cytoplasm. The catalysed reaction is urea + 2 H2O + H(+) = hydrogencarbonate + 2 NH4(+). It functions in the pathway nitrogen metabolism; urea degradation; CO(2) and NH(3) from urea (urease route): step 1/1. This Thermosynechococcus vestitus (strain NIES-2133 / IAM M-273 / BP-1) protein is Urease subunit alpha.